The primary structure comprises 158 residues: SsrA-binding protein (158 aa).

Belongs to the SmpB family.

The protein localises to the cytoplasm. In terms of biological role, required for rescue of stalled ribosomes mediated by trans-translation. Binds to transfer-messenger RNA (tmRNA), required for stable association of tmRNA with ribosomes. tmRNA and SmpB together mimic tRNA shape, replacing the anticodon stem-loop with SmpB. tmRNA is encoded by the ssrA gene; the 2 termini fold to resemble tRNA(Ala) and it encodes a 'tag peptide', a short internal open reading frame. During trans-translation Ala-aminoacylated tmRNA acts like a tRNA, entering the A-site of stalled ribosomes, displacing the stalled mRNA. The ribosome then switches to translate the ORF on the tmRNA; the nascent peptide is terminated with the 'tag peptide' encoded by the tmRNA and targeted for degradation. The ribosome is freed to recommence translation, which seems to be the essential function of trans-translation. The chain is SsrA-binding protein from Symbiobacterium thermophilum (strain DSM 24528 / JCM 14929 / IAM 14863 / T).